Consider the following 940-residue polypeptide: Chromatin assembly factor 1 subunit FSM (940 aa).

Disordered stretches follow at residues 317-473 (NVDD…DPCT), 638-682 (VDSD…FFVP), and 919-940 (KTTQ…PSSQ). The segment covering 320–329 (DSQLQKNTST) has biased composition (polar residues). The stretch at 329–439 (TNEKDTQKAQ…LKKQLAIQKQ (111 aa)) forms a coiled coil. Residues 330-429 (NEKDTQKAQK…QKRREKEAVQ (100 aa)) are compositionally biased toward basic and acidic residues. Positions 430–440 (LKKQLAIQKQA) are enriched in low complexity. The span at 445 to 461 (RFFKNKKDSEKLEKPGG) shows a compositional bias: basic and acidic residues. A compositionally biased stretch (acidic residues) spans 638-650 (VDSDDEWEEEDPG).

The protein belongs to the CHAF1A family. In terms of assembly, component of the chromatin assembly factor 1 (CAF-1) complex, composed of FSM (FAS1), FAS2 and MSI1. In embryo, expressed in leaf primordia, coleoptile and radicle. In seedlings, expressed in cell division zone of roots, SAM and leaf primordia. Expressed in floral organ primordia.

It is found in the nucleus. Functionally, component of the chromatin assembly factor complex (CAF-1) involved in chromatin assembly following DNA replication and DNA repair. Required for several aspects of development, including apical meristem maintenance by regulating the durations of the S- and G2-phases of the cell cycle through its chromatin assembly activity. The protein is Chromatin assembly factor 1 subunit FSM (FSM) of Oryza sativa subsp. japonica (Rice).